The primary structure comprises 284 residues: Pantothenate synthetase (284 aa).

30 to 37 contacts ATP; the sequence is MGNLHDGH. Catalysis depends on His-37, which acts as the Proton donor. Gln-61 is a (R)-pantoate binding site. Gln-61 is a beta-alanine binding site. 149-152 provides a ligand contact to ATP; that stretch reads GEKD. Gln-155 lines the (R)-pantoate pocket. ATP contacts are provided by residues Val-178 and 186 to 189; that span reads LSSR.

Belongs to the pantothenate synthetase family. In terms of assembly, homodimer.

The protein localises to the cytoplasm. The enzyme catalyses (R)-pantoate + beta-alanine + ATP = (R)-pantothenate + AMP + diphosphate + H(+). It functions in the pathway cofactor biosynthesis; (R)-pantothenate biosynthesis; (R)-pantothenate from (R)-pantoate and beta-alanine: step 1/1. Functionally, catalyzes the condensation of pantoate with beta-alanine in an ATP-dependent reaction via a pantoyl-adenylate intermediate. This chain is Pantothenate synthetase, found in Enterobacter sp. (strain 638).